Consider the following 480-residue polypeptide: Uronate isomerase (480 aa).

It belongs to the metallo-dependent hydrolases superfamily. Uronate isomerase family.

It carries out the reaction D-glucuronate = D-fructuronate. It catalyses the reaction aldehydo-D-galacturonate = keto-D-tagaturonate. It participates in carbohydrate metabolism; pentose and glucuronate interconversion. The chain is Uronate isomerase from Phenylobacterium zucineum (strain HLK1).